Here is a 169-residue protein sequence, read N- to C-terminus: MSKPICSTGLRWLWLAVLVVIVDLSSKQWVMTHFALYESVPLIPFFNLTYAQNFGAAFSFLADKSGWQRWFFAGIAIGISVLLMVLMYRSTAKQRLLNCAYALIIGGALGNLFDRMVHGAVIDFIDFHVNNWHFPTFNIADTAICIGAALVIFEGFISPAEKTAMNKGE.

4 helical membrane passes run 4 to 24 (PICSTGLRWLWLAVLVVIVDL), 42 to 62 (LIPFFNLTYAQNFGAAFSFLA), 70 to 90 (WFFAGIAIGISVLLMVLMYRS), and 102 to 122 (ALIIGGALGNLFDRMVHGAVI). Catalysis depends on residues aspartate 123 and aspartate 141. A helical membrane pass occupies residues 137–157 (FNIADTAICIGAALVIFEGFI).

The protein belongs to the peptidase A8 family.

Its subcellular location is the cell inner membrane. It catalyses the reaction Release of signal peptides from bacterial membrane prolipoproteins. Hydrolyzes -Xaa-Yaa-Zaa-|-(S,diacylglyceryl)Cys-, in which Xaa is hydrophobic (preferably Leu), and Yaa (Ala or Ser) and Zaa (Gly or Ala) have small, neutral side chains.. The protein operates within protein modification; lipoprotein biosynthesis (signal peptide cleavage). Functionally, this protein specifically catalyzes the removal of signal peptides from prolipoproteins. In Yersinia enterocolitica serotype O:8 / biotype 1B (strain NCTC 13174 / 8081), this protein is Lipoprotein signal peptidase.